Consider the following 54-residue polypeptide: Protein hunchback (54 aa).

C2H2-type zinc fingers lie at residues 1–3 (RKH), 9–31 (FQCD…RKFH), and 37–54 (YRCA…SFKL).

The protein belongs to the hunchback C2H2-type zinc-finger protein family.

It localises to the nucleus. In terms of biological role, gap class segmentation protein that controls development of head structures. This chain is Protein hunchback (hb), found in Calliphora vicina (Blue blowfly).